We begin with the raw amino-acid sequence, 244 residues long: Protein YIPF4 (244 aa).

The Cytoplasmic segment spans residues 1–113 (MQPPGPPPAY…FNRQVVRDNP (113 aa)). A helical transmembrane segment spans residues 114 to 134 (DFWGPLAVVLFFSMISLYGQF). Over 135–138 (RVVS) the chain is Extracellular. Residues 139-159 (WIITIWIFGSLTIFLLARVLG) traverse the membrane as a helical segment. Over 160 to 166 (GEVAYGQ) the chain is Cytoplasmic. The chain crosses the membrane as a helical span at residues 167–187 (VLGVIGYSLLPLIVIAPVLLV). Topologically, residues 188–195 (VGSFEVVS) are extracellular. Residues 196-216 (TLIKLFGVFWAAYSAASLLVG) form a helical membrane-spanning segment. The Cytoplasmic segment spans residues 217-223 (EEFKTKK). A helical membrane pass occupies residues 224–244 (PLLIYPIFLLYIYFLSLYTGV).

It belongs to the YIP1 family. As to quaternary structure, interacts with YIPF3 and YIPF5. In terms of assembly, (Microbial infection) Interacts with human papillomavirus (HPV) E5 proteins. Expressed in keratinocytes (at protein level).

The protein resides in the golgi apparatus. It is found in the cis-Golgi network membrane. Functionally, involved in the maintenance of the Golgi structure. The polypeptide is Protein YIPF4 (YIPF4) (Homo sapiens (Human)).